The chain runs to 1124 residues: FHF complex subunit HOOK-interacting protein 1B (1124 aa).

Disordered regions lie at residues 1–25, 461–542, 577–599, 713–732, and 838–900; these read MSWLSRLNPRGPGTRTGRHAAPSSP, APSG…QLSD, GENPSPNSAPLPPPPPTSNPSLS, KKVKRDSDVNSGMVETGMNG, and ERVR…PLGQ. A compositionally biased stretch (low complexity) spans 509-532; that stretch reads ANPSSSGSENAPSSPRGSVSSPLS. Positions 583–594 are enriched in pro residues; the sequence is NSAPLPPPPPTS. 2 stretches are compositionally biased toward basic and acidic residues: residues 838 to 858 and 875 to 884; these read ERVRERRVSSRSSEESSRESR and TEQRSSETKP.

This sequence belongs to the FHIP family. As to quaternary structure, component of the FTS/Hook/FHIP complex (FHF complex), composed of AKTIP/FTS, FHIP1B, and one or more members of the Hook family of proteins HOOK1, HOOK2, and HOOK3. The FHF complex associates with the homotypic vesicular sorting complex (the HOPS complex).

Its function is as follows. Component of the FTS/Hook/FHIP complex (FHF complex). The FHF complex may function to promote vesicle trafficking and/or fusion via the homotypic vesicular protein sorting complex (the HOPS complex). FHF complex promotes the distribution of AP-4 complex to the perinuclear area of the cell. The protein is FHF complex subunit HOOK-interacting protein 1B (fhip1b) of Danio rerio (Zebrafish).